The primary structure comprises 559 residues: 5'-AMP-activated protein kinase catalytic subunit alpha-1 (559 aa).

Residues 27–279 (YILGDTLGVG…IKDIREHEWF (253 aa)) enclose the Protein kinase domain. A Phosphothreonine modification is found at threonine 32. Residues 33-41 (LGVGTFGKV) and lysine 56 each bind ATP. The active-site Proton acceptor is the aspartate 150. Threonine 183 is subject to Phosphothreonine; by LKB1 and CaMKK2. A phosphothreonine mark is found at threonine 269 and threonine 355. The AIS stretch occupies residues 302 to 381 (EALKEVCEKF…PERVPFLVAE (80 aa)). A Phosphoserine modification is found at serine 356. At serine 360 the chain carries Phosphoserine; by ULK1. Threonine 368 is modified (phosphothreonine; by ULK1). Residue threonine 382 is modified to Phosphothreonine. Residues serine 397, serine 467, and serine 486 each carry the phosphoserine modification. Over residues 485-505 (KSGTATPQRSGSVSNYRSCQR) the composition is skewed to polar residues. The interval 485-536 (KSGTATPQRSGSVSNYRSCQRSDSDAEAQGKSSEVSLTSSVTSLDSSPVDLT) is disordered. 2 positions are modified to phosphothreonine: threonine 488 and threonine 490. 4 positions are modified to phosphoserine: serine 496, serine 508, serine 524, and serine 527. The span at 516–535 (SSEVSLTSSVTSLDSSPVDL) shows a compositional bias: low complexity.

The protein belongs to the protein kinase superfamily. CAMK Ser/Thr protein kinase family. SNF1 subfamily. As to quaternary structure, AMPK is a heterotrimer of an alpha catalytic subunit (PRKAA1 or PRKAA2), a beta (PRKAB1 or PRKAB2) and a gamma non-catalytic subunits (PRKAG1, PRKAG2 or PRKAG3). Interacts with FNIP1 and FNIP2. In terms of assembly, (Microbial infection) Interacts with Dengue type 2 virus non-structural protein 1; this interaction promotes the AMPK/ERK/mTOR signaling pathway to induce autophagy. It depends on Mg(2+) as a cofactor. In terms of processing, ubiquitinated. Post-translationally, phosphorylated at Thr-183 by STK11/LKB1 in complex with STE20-related adapter-alpha (STRADA) pseudo kinase and CAB39. Also phosphorylated at Thr-183 by CAMKK2; triggered by a rise in intracellular calcium ions, without detectable changes in the AMP/ATP ratio. CAMKK1 can also phosphorylate Thr-183, but at a much lower level. Dephosphorylated by protein phosphatase 2A and 2C (PP2A and PP2C). Phosphorylated by ULK1 and ULK2; leading to negatively regulate AMPK activity and suggesting the existence of a regulatory feedback loop between ULK1, ULK2 and AMPK. Dephosphorylated by PPM1A and PPM1B. Glycosylated; O-GlcNAcylated by OGT, promoting the AMP-activated protein kinase (AMPK) activity.

It is found in the cytoplasm. Its subcellular location is the nucleus. It carries out the reaction L-seryl-[protein] + ATP = O-phospho-L-seryl-[protein] + ADP + H(+). The catalysed reaction is L-threonyl-[protein] + ATP = O-phospho-L-threonyl-[protein] + ADP + H(+). The enzyme catalyses L-seryl-[acetyl-CoA carboxylase] + ATP = O-phospho-L-seryl-[acetyl-CoA carboxylase] + ADP + H(+). It catalyses the reaction L-seryl-[3-hydroxy-3-methylglutaryl-coenzyme A reductase] + ATP = O-phospho-L-seryl-[3-hydroxy-3-methylglutaryl-coenzyme A reductase] + ADP + H(+). It carries out the reaction L-seryl-[tau protein] + ATP = O-phospho-L-seryl-[tau protein] + ADP + H(+). The catalysed reaction is L-threonyl-[tau protein] + ATP = O-phospho-L-threonyl-[tau protein] + ADP + H(+). Its activity is regulated as follows. Activated by phosphorylation on Thr-183. Binding of AMP to non-catalytic gamma subunit (PRKAG1, PRKAG2 or PRKAG3) results in allosteric activation, inducing phosphorylation on Thr-183. AMP-binding to gamma subunit also sustains activity by preventing dephosphorylation of Thr-183. ADP also stimulates Thr-183 phosphorylation, without stimulating already phosphorylated AMPK. ATP promotes dephosphorylation of Thr-183, rendering the enzyme inactive. Under physiological conditions AMPK mainly exists in its inactive form in complex with ATP, which is much more abundant than AMP. AMPK is activated by antihyperglycemic drug metformin, a drug prescribed to patients with type 2 diabetes: in vivo, metformin seems to mainly inhibit liver gluconeogenesis. However, metformin can be used to activate AMPK in muscle and other cells in culture or ex vivo. Selectively inhibited by compound C (6-[4-(2-Piperidin-1-yl-ethoxy)-phenyl)]-3-pyridin-4-yl-pyyrazolo[1,5-a] pyrimidine. Activated by resveratrol, a natural polyphenol present in red wine, and S17834, a synthetic polyphenol. In terms of biological role, catalytic subunit of AMP-activated protein kinase (AMPK), an energy sensor protein kinase that plays a key role in regulating cellular energy metabolism. In response to reduction of intracellular ATP levels, AMPK activates energy-producing pathways and inhibits energy-consuming processes: inhibits protein, carbohydrate and lipid biosynthesis, as well as cell growth and proliferation. AMPK acts via direct phosphorylation of metabolic enzymes, and by longer-term effects via phosphorylation of transcription regulators. Regulates lipid synthesis by phosphorylating and inactivating lipid metabolic enzymes such as ACACA, ACACB, GYS1, HMGCR and LIPE; regulates fatty acid and cholesterol synthesis by phosphorylating acetyl-CoA carboxylase (ACACA and ACACB) and hormone-sensitive lipase (LIPE) enzymes, respectively. Promotes lipolysis of lipid droplets by mediating phosphorylation of isoform 1 of CHKA (CHKalpha2). Regulates insulin-signaling and glycolysis by phosphorylating IRS1, PFKFB2 and PFKFB3. AMPK stimulates glucose uptake in muscle by increasing the translocation of the glucose transporter SLC2A4/GLUT4 to the plasma membrane, possibly by mediating phosphorylation of TBC1D4/AS160. Regulates transcription and chromatin structure by phosphorylating transcription regulators involved in energy metabolism such as CRTC2/TORC2, FOXO3, histone H2B, HDAC5, MEF2C, MLXIPL/ChREBP, EP300, HNF4A, p53/TP53, SREBF1, SREBF2 and PPARGC1A. Acts as a key regulator of glucose homeostasis in liver by phosphorylating CRTC2/TORC2, leading to CRTC2/TORC2 sequestration in the cytoplasm. In response to stress, phosphorylates 'Ser-36' of histone H2B (H2BS36ph), leading to promote transcription. Acts as a key regulator of cell growth and proliferation by phosphorylating FNIP1, TSC2, RPTOR, WDR24 and ATG1/ULK1: in response to nutrient limitation, negatively regulates the mTORC1 complex by phosphorylating RPTOR component of the mTORC1 complex and by phosphorylating and activating TSC2. Also phosphorylates and inhibits GATOR2 subunit WDR24 in response to nutrient limitation, leading to suppress glucose-mediated mTORC1 activation. In response to energetic stress, phosphorylates FNIP1, inactivating the non-canonical mTORC1 signaling, thereby promoting nuclear translocation of TFEB and TFE3, and inducing transcription of lysosomal or autophagy genes. In response to nutrient limitation, promotes autophagy by phosphorylating and activating ATG1/ULK1. In that process, it also activates WDR45/WIPI4. Phosphorylates CASP6, thereby preventing its autoprocessing and subsequent activation. In response to nutrient limitation, phosphorylates transcription factor FOXO3 promoting FOXO3 mitochondrial import. Also acts as a regulator of cellular polarity by remodeling the actin cytoskeleton; probably by indirectly activating myosin. AMPK also acts as a regulator of circadian rhythm by mediating phosphorylation of CRY1, leading to destabilize it. May regulate the Wnt signaling pathway by phosphorylating CTNNB1, leading to stabilize it. Also has tau-protein kinase activity: in response to amyloid beta A4 protein (APP) exposure, activated by CAMKK2, leading to phosphorylation of MAPT/TAU; however the relevance of such data remains unclear in vivo. Also phosphorylates CFTR, EEF2K, KLC1, NOS3 and SLC12A1. Regulates hepatic lipogenesis. Activated via SIRT3, represses sterol regulatory element-binding protein (SREBP) transcriptional activities and ATP-consuming lipogenesis to restore cellular energy balance. Upon stress, regulates mitochondrial fragmentation through phosphorylation of MTFR1L. The protein is 5'-AMP-activated protein kinase catalytic subunit alpha-1 of Homo sapiens (Human).